Reading from the N-terminus, the 88-residue chain is Acyl carrier protein (88 aa).

The Carrier domain maps to 4–79 (DSVPAKVMEI…AAVDYIQNKM (76 aa)). An O-(pantetheine 4'-phosphoryl)serine modification is found at Ser-39.

Belongs to the acyl carrier protein (ACP) family. In terms of processing, 4'-phosphopantetheine is transferred from CoA to a specific serine of apo-ACP by AcpS. This modification is essential for activity because fatty acids are bound in thioester linkage to the sulfhydryl of the prosthetic group.

It is found in the cytoplasm. It functions in the pathway lipid metabolism; fatty acid biosynthesis. Functionally, carrier of the growing fatty acid chain in fatty acid biosynthesis. This Trichodesmium erythraeum (strain IMS101) protein is Acyl carrier protein.